We begin with the raw amino-acid sequence, 240 residues long: Aliphatic sulfonates import ATP-binding protein SsuB (240 aa).

One can recognise an ABC transporter domain in the interval 6–227 (IQLSKLRKNF…VKDRHFACFE (222 aa)). Residue 38–45 (GESGCGKS) coordinates ATP.

This sequence belongs to the ABC transporter superfamily. Aliphatic sulfonates importer (TC 3.A.1.17.2) family. As to quaternary structure, the complex is composed of two ATP-binding proteins (SsuB), two transmembrane proteins (SsuC) and a solute-binding protein (SsuA).

The protein localises to the cell inner membrane. It carries out the reaction ATP + H2O + aliphatic sulfonate-[sulfonate-binding protein]Side 1 = ADP + phosphate + aliphatic sulfonateSide 2 + [sulfonate-binding protein]Side 1.. Part of the ABC transporter complex SsuABC involved in aliphatic sulfonates import. Responsible for energy coupling to the transport system. The chain is Aliphatic sulfonates import ATP-binding protein SsuB from Zymomonas mobilis subsp. mobilis (strain ATCC 31821 / ZM4 / CP4).